The sequence spans 895 residues: Ral guanine nucleotide dissociation stimulator (895 aa).

In terms of domain architecture, N-terminal Ras-GEF spans 112–237; that stretch reads KVRTVKAGTL…RAHLLLAQLE (126 aa). Residues 301–324 form a disordered region; sequence SELEPALEPPLDPEPTLAPAPELD. The span at 307-318 shows a compositional bias: pro residues; sequence LEPPLDPEPTLA. Positions 367–629 constitute a Ras-GEF domain; that stretch reads PPDLVAEQFT…YNLSCELEPP (263 aa). 2 disordered regions span residues 650-669 and 708-754; these read ERRQAPSTELSTSSSAHSKS and VPES…STTR. Composition is skewed to low complexity over residues 656–667 and 726–753; these read STELSTSSSAHS and SSPETSGISSASSSTSSSSASTTPVSTT. In terms of domain architecture, Ras-associating spans 779 to 866; the sequence is DCCIIRVSLD…YDFILKKRAF (88 aa). At Y795 the chain carries Phosphotyrosine.

Interacts with RIT1 and RIT2. Interacts with TRAF3. Interacts with HRAS. Phosphorylation of Tyr-795 by MET blocks HRAS binding. Expressed in all tissues examined.

Its subcellular location is the cytoplasm. The protein localises to the nucleus. Its function is as follows. Functions as a guanine nucleotide exchange factor (GEF) activating either RalA or RalB GTPases and plays an important role in intracellular transport. Interacts and acts as an effector molecule for R-Ras, H-Ras, K-Ras, and Rap. During bacterial clearance, recognizes 'Lys-33'-linked polyubiquitinated TRAF3 and subsequently mediates assembly of the exocyst complex. This is Ral guanine nucleotide dissociation stimulator (Ralgds) from Rattus norvegicus (Rat).